The sequence spans 668 residues: GTP-binding protein 1 (668 aa).

A disordered region spans residues 1-32 (MAAERSRSPVDSPVPASMFAPEPSSPGAARAA). Phosphoserine is present on residues S6, S8, S12, S24, S25, S44, S47, and S69. The tr-type G domain occupies 158-389 (FLEVRVAVVG…LNLLSPRTSY (232 aa)). The tract at residues 167–174 (GNVDAGKS) is G1. 167–174 (GNVDAGKS) lines the GTP pocket. Positions 206-210 (GRTSS) are G2. A G3 region spans residues 252 to 255 (DLAG). Residues 252–256 (DLAGH) and 308–311 (TKID) each bind GTP. The tract at residues 308-311 (TKID) is G4. The interval 366-368 (SNV) is G5. Positions 573 to 595 (LLQTTNNSPMNSKPQQIKMQSTK) are enriched in polar residues. The disordered stretch occupies residues 573 to 668 (LLQTTNNSPM…GACVTPASGC (96 aa)). S580 carries the phosphoserine modification. Over residues 609–619 (GVPAAGGPPTG) the composition is skewed to low complexity. Polar residues predominate over residues 624–637 (SLGTAQAASTSGLQ). The segment covering 646 to 657 (GRRRGGQRHKVK) has biased composition (basic residues).

Belongs to the TRAFAC class translation factor GTPase superfamily. Classic translation factor GTPase family. GTPBP1 subfamily. In terms of assembly, interacts with EXOSC2/RRP4, EXOSC3/RRP40, EXOSC5/RRP46, HNRNPD, HNRNPR and SYNCRIP. Identified in a complex with AANAT mRNA, but does not bind mRNA by itself. In terms of tissue distribution, detected in some neurons in the brain cortex. Detected in small arteries, dendritic cells and macrophages in the thymus. Detected in lung bronchi, in bronchial epithelial cells and in bronchial smooth muscle cells. Detected in smooth muscle cells in a broad range of organs (at protein level). Expressed in brain, thymus, lung, and kidney.

The protein localises to the cytoplasm. Functionally, promotes degradation of target mRNA species. Plays a role in the regulation of circadian mRNA stability. Binds GTP and has GTPase activity. This is GTP-binding protein 1 (Gtpbp1) from Mus musculus (Mouse).